Consider the following 803-residue polypeptide: Exo-1,4-beta-xylosidase xlnD (803 aa).

The signal sequence occupies residues 1–18; that stretch reads MRSLISVAVLSALPTAFS. Residues Asn-21, Asn-44, Asn-85, Asn-122, Asn-140, and Asn-234 are each glycosylated (N-linked (GlcNAc...) asparagine). Residue Asp-307 is part of the active site. N-linked (GlcNAc...) asparagine glycans are attached at residues Asn-437, Asn-474, Asn-515, Asn-611, Asn-676, and Asn-698.

It belongs to the glycosyl hydrolase 3 family.

The protein localises to the secreted. The enzyme catalyses Hydrolysis of (1-&gt;4)-beta-D-xylans, to remove successive D-xylose residues from the non-reducing termini.. It participates in glycan degradation; xylan degradation. Xylan 1,4-beta-xylosidase involved in the hydrolysis of xylan, a major structural heterogeneous polysaccharide found in plant biomass representing the second most abundant polysaccharide in the biosphere, after cellulose. The sequence is that of Exo-1,4-beta-xylosidase xlnD (xlnD) from Emericella nidulans (strain FGSC A4 / ATCC 38163 / CBS 112.46 / NRRL 194 / M139) (Aspergillus nidulans).